The chain runs to 434 residues: uncharacterized protein (434 aa).

5 helical membrane-spanning segments follow: residues 27 to 47 (IFLLFVILVFVPIGFVFQSVI), 64 to 84 (FYLSSIKSISLLFLLLLFVNW), 244 to 264 (IILAFYVTQKILIMIILATVL), 289 to 309 (VPVNVFAMTIAIAIRFVPSLL), and 387 to 407 (LILTALYFVVIIFLTVKGAVF).

Belongs to the CbiQ family.

The protein resides in the cell membrane. This is an uncharacterized protein from Mycoplasma pneumoniae (strain ATCC 29342 / M129 / Subtype 1) (Mycoplasmoides pneumoniae).